We begin with the raw amino-acid sequence, 423 residues long: UDP-N-acetylglucosamine 1-carboxyvinyltransferase (423 aa).

Residue 22–23 (KN) participates in phosphoenolpyruvate binding. A UDP-N-acetyl-alpha-D-glucosamine-binding site is contributed by Arg-93. Cys-117 functions as the Proton donor in the catalytic mechanism. Cys-117 bears the 2-(S-cysteinyl)pyruvic acid O-phosphothioketal mark. Residues 122-126 (RPVDL), Asp-308, and Ile-330 each bind UDP-N-acetyl-alpha-D-glucosamine.

This sequence belongs to the EPSP synthase family. MurA subfamily.

It localises to the cytoplasm. It catalyses the reaction phosphoenolpyruvate + UDP-N-acetyl-alpha-D-glucosamine = UDP-N-acetyl-3-O-(1-carboxyvinyl)-alpha-D-glucosamine + phosphate. It participates in cell wall biogenesis; peptidoglycan biosynthesis. Its function is as follows. Cell wall formation. Adds enolpyruvyl to UDP-N-acetylglucosamine. This Maricaulis maris (strain MCS10) (Caulobacter maris) protein is UDP-N-acetylglucosamine 1-carboxyvinyltransferase.